The sequence spans 407 residues: Peptidase T (407 aa).

Position 81 (H81) interacts with Zn(2+). Residue D83 is part of the active site. D142 provides a ligand contact to Zn(2+). The active-site Proton acceptor is the E176. Zn(2+)-binding residues include E177, D199, and H381.

This sequence belongs to the peptidase M20B family. The cofactor is Zn(2+).

The protein localises to the cytoplasm. It catalyses the reaction Release of the N-terminal residue from a tripeptide.. Functionally, cleaves the N-terminal amino acid of tripeptides. The chain is Peptidase T from Streptococcus pneumoniae (strain Hungary19A-6).